The sequence spans 1377 residues: DNA-directed RNA polymerase subunit beta (1377 aa).

It belongs to the RNA polymerase beta chain family. As to quaternary structure, the RNAP catalytic core consists of 2 alpha, 1 beta, 1 beta' and 1 omega subunit. When a sigma factor is associated with the core the holoenzyme is formed, which can initiate transcription.

The enzyme catalyses RNA(n) + a ribonucleoside 5'-triphosphate = RNA(n+1) + diphosphate. In terms of biological role, DNA-dependent RNA polymerase catalyzes the transcription of DNA into RNA using the four ribonucleoside triphosphates as substrates. The polypeptide is DNA-directed RNA polymerase subunit beta (Aromatoleum aromaticum (strain DSM 19018 / LMG 30748 / EbN1) (Azoarcus sp. (strain EbN1))).